The following is a 217-amino-acid chain: Small ribosomal subunit protein uS3 (217 aa).

Residues 38 to 106 (IRKFIDNELK…KVHINVIEIK (69 aa)) form the KH type-2 domain.

This sequence belongs to the universal ribosomal protein uS3 family. In terms of assembly, part of the 30S ribosomal subunit. Forms a tight complex with proteins S10 and S14.

Functionally, binds the lower part of the 30S subunit head. Binds mRNA in the 70S ribosome, positioning it for translation. This is Small ribosomal subunit protein uS3 from Staphylococcus haemolyticus (strain JCSC1435).